A 457-amino-acid polypeptide reads, in one-letter code: uncharacterized protein (457 aa).

12 helical membrane passes run 18 to 38 (VMTVAGATVGFGATWRFPYLV), 44 to 64 (GAYVLLFCIAMIVIGIPMILV), 101 to 121 (MGLLGAFGIMAYYMVLGGWVI), 158 to 178 (IIFYTLLFVIVNYIILAKGII), 188 to 208 (LMPLLFIFLIGMVIRNVTLPG), 228 to 248 (LFIFVLGQVFFALSLGFGVLI), 273 to 293 (IIAVLAGFMIFPSLFTFGIEP), 294 to 314 (NAGPTLVFQSLPIVFSHLWAG), 316 to 336 (FFAIIFFGLLLIAALTTSITI), 355 to 375 (AIVLTLSGIFLLGNIPAILGD), 396 to 416 (SGNILFMLTALGCAIFVGFVL), and 433 to 453 (IKIWFNYVKFVVPLIILVIFI).

The protein belongs to the sodium:neurotransmitter symporter (SNF) (TC 2.A.22) family.

It localises to the cell membrane. Its function is as follows. Putative sodium-dependent transporter. This is an uncharacterized protein from Haemophilus influenzae (strain ATCC 51907 / DSM 11121 / KW20 / Rd).